A 343-amino-acid polypeptide reads, in one-letter code: Armadillo repeat-containing protein 10 (343 aa).

The helical transmembrane segment at 5-27 (RGAGWVAAGLLLGAGACYCIYRL) threads the bilayer. Residues 43–83 (SKSAGALEEGTSEGQLCGRSARPQTGGTWESQWSKTSQPED) form a disordered region. The residue at position 45 (serine 45) is a Phosphoserine. A Phosphothreonine modification is found at glutamate 50. The segment covering 64–82 (RPQTGGTWESQWSKTSQPE) has biased composition (polar residues). Threonine 85 carries the phosphothreonine modification. The stretch at 138-180 (GGIPIVANKINHSNQSIKEKALNALNNLSVNVENQIKIKIYIS) is one ARM repeat.

In terms of assembly, interacts with the DNA-binding domain of p53/TP53. In terms of tissue distribution, expressed in all tissues tested with higher expression in placenta, liver, kidney, heart and brain.

Its subcellular location is the endoplasmic reticulum membrane. It is found in the mitochondrion outer membrane. Functionally, may play a role in cell survival and cell growth. May suppress the transcriptional activity of p53/TP53. In Homo sapiens (Human), this protein is Armadillo repeat-containing protein 10 (ARMC10).